The following is an 878-amino-acid chain: MASTGEPDRKRRHFSSISPSEAAAAVKKQPFFWPSSEDKLDTAVLQFQNLKLSQKLEAQQVECSILEDKLSQIKEKQLPYNSSLKTVHKSWEKLTASVESCSVRVSDSSSGAHRFVNKEDGSSPAVKNDFINRLLETGATESSSSNICSNQMEENGVNTSSQMTQTLYNLVAATEDLRCLKDELYPTVLRTNLGKDLCGQLALSELESEIKSFRGDLDDVLVKFKSLSRELQSHRDADAKVRVDLKRIRGELEDEVVELQQCNGDLSALRAERDATAGAFFPVLSLGNKLATSDRERDKQRDLQDMETVLKELTVLASGRLQQLKNLHEERTKMLGKMSNLQNKSKSVRCISSSQACLSLKDQLEKSKEAVFQYMALLEKLQVEKDSIVWKEREINIKNELGDVSRKTSAVTDSRMASLDSEIQKQLDEKMRIKTRLGNISRERGRKEIFADMKALISSFPEEMSSMRSQLNNYKETAGGIHSLRADVQSLSGVLCRKTKEYEALQLRSADYASQLGDLNATVCDLKNSHEELKLFLDMYKRESTDARDIAEAKEQEYRAWAHVQSLKSSLDEQNLELRVKAANEAEAVSQQMLAAAEAEIADLRQKMDDCKRDVAKHSDILKSKHEEHGTYLSEIQTIGSAYEDIVPQNQQLLLQVTERDDYNIKLFLEGITSRQMQDTLLIDKYIMDKDIQQGSAYASFLSKKSSRIEDQLRFCTDQFQKLAEDKYQKSVSLENLQKKRADIGNGLEQARSRLEESHSKVEQSRLDYGALELELEIERFNRRRIEEEMEIAKKKVSRLRSLIEGSSAIQKLRQELSEFKEILKCKACNDRPKEVVITKCYHLFCNPCVQKLTGTRQKKCPTCSASFGPNDIKPIYI.

The segment at 1-21 (MASTGEPDRKRRHFSSISPSE) is disordered. Coiled coils occupy residues 48–76 (QNLK…IKEK), 200–261 (QLAL…ELQQ), 293–382 (SDRE…EKLQ), and 537–624 (LDMY…ILKS). An RING-type zinc finger spans residues 826 to 865 (CKACNDRPKEVVITKCYHLFCNPCVQKLTGTRQKKCPTCS).

Belongs to the BRE1 family. In terms of assembly, may act as a tetramer consisting of two copies of HUB1 and two copies of HUB2. Interacts with MED21. Ubiquitously expressed.

It localises to the nucleus. It catalyses the reaction S-ubiquitinyl-[E2 ubiquitin-conjugating enzyme]-L-cysteine + [acceptor protein]-L-lysine = [E2 ubiquitin-conjugating enzyme]-L-cysteine + N(6)-ubiquitinyl-[acceptor protein]-L-lysine.. The protein operates within protein modification; protein ubiquitination. Functionally, E3 ubiquitin-protein ligase that monoubiquitinates H2B to form H2BK143ub1. H2BK143ub1 gives a specific tag for epigenetic transcriptional activation and is also prerequisite for H3K4me and maybe H3K79me. It thereby plays a central role in histone code and gene regulation. Forms a ubiquitin ligase complex in cooperation with the E2 enzyme UBC2/RAD6. Required for the regulation of flowering time and defense against necrotrophic fungal pathogens. Involved in the control of seed dormancy and germination. This Arabidopsis thaliana (Mouse-ear cress) protein is E3 ubiquitin-protein ligase BRE1-like 1 (HUB1).